The sequence spans 143 residues: Ribonuclease VapC33 (143 aa).

Asp5 and Asp108 together coordinate Mg(2+).

The protein belongs to the PINc/VapC protein family. Requires Mg(2+) as cofactor.

Its function is as follows. Toxic component of a type II toxin-antitoxin (TA) system. An RNase. Its toxic effect is neutralized by coexpression with cognate antitoxin VapB33. This is Ribonuclease VapC33 from Mycobacterium tuberculosis (strain CDC 1551 / Oshkosh).